The primary structure comprises 291 residues: N-acetylmannosamine kinase (291 aa).

ATP-binding positions include 5–12 (AIDIGGTK) and 132–139 (GVGGGVVS). Residues H156, C166, C168, and C173 each contribute to the Zn(2+) site.

The protein belongs to the ROK (NagC/XylR) family. NanK subfamily. Homodimer.

The enzyme catalyses an N-acyl-D-mannosamine + ATP = an N-acyl-D-mannosamine 6-phosphate + ADP + H(+). Its pathway is amino-sugar metabolism; N-acetylneuraminate degradation; D-fructose 6-phosphate from N-acetylneuraminate: step 2/5. Its function is as follows. Catalyzes the phosphorylation of N-acetylmannosamine (ManNAc) to ManNAc-6-P. The protein is N-acetylmannosamine kinase of Escherichia coli (strain ATCC 8739 / DSM 1576 / NBRC 3972 / NCIMB 8545 / WDCM 00012 / Crooks).